Here is a 503-residue protein sequence, read N- to C-terminus: Glutamate/gamma-aminobutyrate antiporter (503 aa).

33 to 43 (LHLVFFLLLGG) contributes to the L-glutamate binding site. 7 consecutive transmembrane segments (helical) span residues 35-55 (LVFF…LCAA), 153-173 (FVVG…AYFI), 194-214 (VSTL…EASA), 232-252 (ILLV…VAAV), 366-386 (LTVV…FVLI), 407-427 (IIAG…FVPP), and 440-460 (MILL…YELH).

This sequence belongs to the amino acid-polyamine-organocation (APC) superfamily. Glutamate:GABA antiporter (GGA) (TC 2.A.3.7) family.

It localises to the cell membrane. The catalysed reaction is 4-aminobutanoate(in) + L-glutamate(out) = 4-aminobutanoate(out) + L-glutamate(in). In terms of biological role, involved in glutaminase-dependent acid resistance. Exchanges extracellular glutamate (Glu) for intracellular gamma-aminobutyric acid (GABA) under acidic conditions. In Lactococcus lactis subsp. cremoris (strain MG1363), this protein is Glutamate/gamma-aminobutyrate antiporter.